Reading from the N-terminus, the 262-residue chain is Nurim (262 aa).

Residues 1 to 4 are Nuclear-facing; sequence MAPA. The helical transmembrane segment at 5–28 threads the bilayer; it reads LLLVPAALASFILAFGTGVEFVRF. Over 29–58 the chain is Perinuclear space; the sequence is TSLRPLLGGIPESGGPDARQGWLAALQDQS. A helical membrane pass occupies residues 59–80; sequence ILVPLAWDLGLLLLFVGQHSLM. The Nuclear portion of the chain corresponds to 81–97; that stretch reads ATETVKAWMSRYFGVLQ. Residues 98–114 traverse the membrane as a helical segment; it reads RSLYVACTALALQLVMR. Over 115–133 the chain is Perinuclear space; it reads YWEPVPRGPVLWEAQAEPW. Residues 134-164 traverse the membrane as a helical segment; it reads ATWVPLLCFVLHVISWLLIFSILLVFDYAEL. The Nuclear portion of the chain corresponds to 165–191; sequence MGLKQVYYHVLGLGEPLALKSPRALRL. Residues 192 to 210 traverse the membrane as a helical segment; it reads FSHLRHPVCVELLTVLWVV. Over 211 to 216 the chain is Perinuclear space; the sequence is PTLGTD. Residues 217-234 form a helical membrane-spanning segment; the sequence is RLLLALLLTLYLGLAHGL. At 235–262 the chain is on the nuclear side; sequence DQQDLRYLRAQLQRKLHLLSRPQDGEAE.

The protein belongs to the nurim family.

It is found in the nucleus inner membrane. The chain is Nurim (NRM) from Sus scrofa (Pig).